We begin with the raw amino-acid sequence, 191 residues long: Protein Ves (191 aa).

It belongs to the Ves family.

The sequence is that of Protein Ves from Escherichia coli (strain K12 / MC4100 / BW2952).